The following is a 230-amino-acid chain: Probable septum site-determining protein MinC (230 aa).

The protein belongs to the MinC family. As to quaternary structure, interacts with MinD and FtsZ.

Its function is as follows. Cell division inhibitor that blocks the formation of polar Z ring septums. Rapidly oscillates between the poles of the cell to destabilize FtsZ filaments that have formed before they mature into polar Z rings. Prevents FtsZ polymerization. The sequence is that of Probable septum site-determining protein MinC from Rhodopseudomonas palustris (strain BisA53).